Reading from the N-terminus, the 88-residue chain is MANSKSAKKRALQSEKRRQHNASRRSMLRTYVKKVIAAIKSGDHKAATEAFAAAQPIVDRMATKGLIHKNKAARQKARLNTKIKALAA.

Residues 1-27 form a disordered region; it reads MANSKSAKKRALQSEKRRQHNASRRSM.

This sequence belongs to the bacterial ribosomal protein bS20 family.

Functionally, binds directly to 16S ribosomal RNA. The chain is Small ribosomal subunit protein bS20 from Shewanella denitrificans (strain OS217 / ATCC BAA-1090 / DSM 15013).